Reading from the N-terminus, the 216-residue chain is ATP phosphoribosyltransferase (216 aa).

The protein belongs to the ATP phosphoribosyltransferase family. Short subfamily. Heteromultimer composed of HisG and HisZ subunits.

The protein resides in the cytoplasm. It catalyses the reaction 1-(5-phospho-beta-D-ribosyl)-ATP + diphosphate = 5-phospho-alpha-D-ribose 1-diphosphate + ATP. It functions in the pathway amino-acid biosynthesis; L-histidine biosynthesis; L-histidine from 5-phospho-alpha-D-ribose 1-diphosphate: step 1/9. In terms of biological role, catalyzes the condensation of ATP and 5-phosphoribose 1-diphosphate to form N'-(5'-phosphoribosyl)-ATP (PR-ATP). Has a crucial role in the pathway because the rate of histidine biosynthesis seems to be controlled primarily by regulation of HisG enzymatic activity. This chain is ATP phosphoribosyltransferase, found in Chromohalobacter salexigens (strain ATCC BAA-138 / DSM 3043 / CIP 106854 / NCIMB 13768 / 1H11).